A 173-amino-acid polypeptide reads, in one-letter code: Globin, cuticular isoform (173 aa).

An N-terminal signal peptide occupies residues 1 to 16 (MLWFVAVCFAIASVSA). In terms of domain architecture, Globin spans 17-166 (MSPADVKKHT…FNSEAQHQLE (150 aa)). His113 provides a ligand contact to heme b.

The protein belongs to the globin family. In terms of tissue distribution, expressed only by adult nematodes in the gut.

It is found in the secreted. Its subcellular location is the extracellular space. The chain is Globin, cuticular isoform (GLBC) from Nippostrongylus brasiliensis (Rat hookworm).